Consider the following 46-residue polypeptide: Protein PsbN (46 aa).

The helical transmembrane segment at 7–27 (GLSIAITFAVILLALTGFSIY) threads the bilayer.

Belongs to the PsbN family.

It localises to the cellular thylakoid membrane. Functionally, may play a role in photosystem I and II biogenesis. The polypeptide is Protein PsbN (Synechococcus elongatus (strain ATCC 33912 / PCC 7942 / FACHB-805) (Anacystis nidulans R2)).